Consider the following 376-residue polypeptide: uncharacterized protein (376 aa).

The signal sequence occupies residues 1–28 (MCKPRVWRIAHTIVHVGALLLGTSQLTT). A lipid anchor (N-palmitoyl cysteine) is attached at cysteine 29. The S-diacylglycerol cysteine moiety is linked to residue cysteine 29.

The protein belongs to the TP013X lipoprotein family.

It localises to the cell membrane. This is an uncharacterized protein from Treponema pallidum (strain Nichols).